We begin with the raw amino-acid sequence, 353 residues long: MKKTIVALAVAAVAATSANAATVYNQDGTKVDVNGSLRLILKKEKNERGDLVDNGSRVSFKASHDLGEGLSALAYTELRFSKNVPVQVKDQQGEVVREYEVEKLGNNVHVKRLYAGFAYEGLGTLTFGNQLTIGDDVGLSDYTYFNSGINNLLSSGEKAINFKSAEFNGFTFGGAYVFSADADKQALRDGRGFVVAGLYNRKMGDVGFAFEAGYSQKYVKQEVEQNPPAAQKVFKDEKEKAFMVGAELSYAGLALGVDYAQSKVTNVDGKKRALEVGLNYDLNDRAKVYTDFIWEKEGPKGDVTRNRTVAVGFGYKLHKQVETFVEAAWGREKDSDGVTTKNNVVGTGLRVHF.

Positions 1 to 20 (MKKTIVALAVAAVAATSANA) are cleaved as a signal peptide.

Disulfide bond interactions within and between MOMP molecules and other components form high molecular-weight oligomers.

The protein resides in the cell outer membrane. Structural rigidity of the outer membrane of elementary bodies and porin forming, permitting diffusion of solutes through the intracellular reticulate body membrane. This chain is Major outer membrane protein (ompH), found in Pasteurella multocida.